A 322-amino-acid polypeptide reads, in one-letter code: Large ribosomal subunit protein uL29m (322 aa).

The segment at 1–44 is disordered; it reads MLNVQRGLHTTVRLSARTKYTKPKPKPQARVIKSEPSQVTHHDN.

It belongs to the universal ribosomal protein uL29 family. As to quaternary structure, component of the mitochondrial large ribosomal subunit. Mature mitochondrial ribosomes consist of a small (37S) and a large (54S) subunit. The 37S subunit contains at least 33 different proteins and 1 molecule of RNA (15S). The 54S subunit contains at least 45 different proteins and 1 molecule of RNA (21S).

Its subcellular location is the mitochondrion. The protein is Large ribosomal subunit protein uL29m (MRPL4) of Vanderwaltozyma polyspora (strain ATCC 22028 / DSM 70294 / BCRC 21397 / CBS 2163 / NBRC 10782 / NRRL Y-8283 / UCD 57-17) (Kluyveromyces polysporus).